Consider the following 156-residue polypeptide: Small ribosomal subunit protein uS7 (156 aa).

The protein belongs to the universal ribosomal protein uS7 family. In terms of assembly, part of the 30S ribosomal subunit. Contacts proteins S9 and S11.

In terms of biological role, one of the primary rRNA binding proteins, it binds directly to 16S rRNA where it nucleates assembly of the head domain of the 30S subunit. Is located at the subunit interface close to the decoding center, probably blocks exit of the E-site tRNA. This Thiomonas delicata (Thiomonas cuprina) protein is Small ribosomal subunit protein uS7.